The chain runs to 203 residues: Large ribosomal subunit protein bL25 (203 aa).

The protein belongs to the bacterial ribosomal protein bL25 family. CTC subfamily. As to quaternary structure, part of the 50S ribosomal subunit; part of the 5S rRNA/L5/L18/L25 subcomplex. Contacts the 5S rRNA. Binds to the 5S rRNA independently of L5 and L18.

Its function is as follows. This is one of the proteins that binds to the 5S RNA in the ribosome where it forms part of the central protuberance. The chain is Large ribosomal subunit protein bL25 from Psychromonas ingrahamii (strain DSM 17664 / CCUG 51855 / 37).